We begin with the raw amino-acid sequence, 82 residues long: Small ribosomal subunit protein eS21z (82 aa).

The residue at position 1 (methionine 1) is an N-acetylmethionine.

It belongs to the eukaryotic ribosomal protein eS21 family.

This is Small ribosomal subunit protein eS21z (RPS21B) from Arabidopsis thaliana (Mouse-ear cress).